Here is a 436-residue protein sequence, read N- to C-terminus: Protein arginine methyltransferase NDUFAF7, mitochondrial (436 aa).

A mitochondrion-targeting transit peptide spans 1–41 (MNALVRRCVARTGIPSIWRRKCFSSGNEPAESNHVTPMLRH). The tract at residues 413-436 (QGGKACQSEAPSTSVPGFDELVWH) is disordered.

The protein belongs to the NDUFAF7 family. As to quaternary structure, interacts with NDUFS2.

It is found in the mitochondrion. It catalyses the reaction L-arginyl-[protein] + 2 S-adenosyl-L-methionine = N(omega),N(omega)'-dimethyl-L-arginyl-[protein] + 2 S-adenosyl-L-homocysteine + 2 H(+). In terms of biological role, arginine methyltransferase involved in the assembly or stability of mitochondrial NADH:ubiquinone oxidoreductase complex (complex I). Acts by mediating symmetric dimethylation of 'Arg-118' of NDUFS2 after it assembles into the complex I, stabilizing the early intermediate complex. The protein is Protein arginine methyltransferase NDUFAF7, mitochondrial of Rattus norvegicus (Rat).